The sequence spans 190 residues: 3-isopropylmalate dehydratase small subunit (190 aa).

The protein belongs to the LeuD family. LeuD type 1 subfamily. As to quaternary structure, heterodimer of LeuC and LeuD.

The catalysed reaction is (2R,3S)-3-isopropylmalate = (2S)-2-isopropylmalate. It functions in the pathway amino-acid biosynthesis; L-leucine biosynthesis; L-leucine from 3-methyl-2-oxobutanoate: step 2/4. Functionally, catalyzes the isomerization between 2-isopropylmalate and 3-isopropylmalate, via the formation of 2-isopropylmaleate. This is 3-isopropylmalate dehydratase small subunit from Staphylococcus aureus (strain MRSA252).